A 374-amino-acid chain; its full sequence is uncharacterized protein (374 aa).

Basic and acidic residues predominate over residues 1-13 (METKYHEYDDVQT). Disordered regions lie at residues 1 to 20 (METK…PSNK), 91 to 193 (SPMT…PLNQ), and 236 to 374 (KINN…SDFE). A compositionally biased stretch (low complexity) spans 95–155 (NNNNNNNNNN…NNSSNNNNNN (61 aa)). The segment covering 166 to 193 (ISSNQSSPLSIYSTPPNPSSYVSSPLNQ) has biased composition (polar residues). A compositionally biased stretch (pro residues) spans 242–262 (APPPPPKACAPPPPPPPPPPI). Over residues 277-300 (NNNNNNNNNNNSSNTNDSNNTNNT) the composition is skewed to low complexity.

This is an uncharacterized protein from Dictyostelium discoideum (Social amoeba).